A 190-amino-acid chain; its full sequence is MAKGLEKFNELVESFANLPTIGKKTAIRLAYHLCINNQIDGMKLAHNIENAIRFIKPCGQCGALSENELCEICSDEERNKNILCIVESPKDILTLEESQSYNGLYFVLDELNEEKLEKLKQIILKLNISELIFALTHSINSDATIFFIEDKFKGLNLTFSKIAQGIPSGVNLENVDLISLNKAMNFRTKI.

The C4-type zinc-finger motif lies at 58–73 (CGQCGALSENELCEIC). In terms of domain architecture, Toprim spans 81 to 167 (NILCIVESPK…TFSKIAQGIP (87 aa)).

This sequence belongs to the RecR family.

In terms of biological role, may play a role in DNA repair. It seems to be involved in an RecBC-independent recombinational process of DNA repair. It may act with RecF and RecO. This Campylobacter jejuni subsp. jejuni serotype O:6 (strain 81116 / NCTC 11828) protein is Recombination protein RecR.